A 227-amino-acid chain; its full sequence is Isopentenyl-diphosphate Delta-isomerase 1 (227 aa).

Residue K36 coordinates substrate. H40 and H51 together coordinate Mg(2+). One can recognise a Nudix hydrolase domain in the interval L49–I199. Residues R70 and K74 each coordinate substrate. C86 is a catalytic residue. Substrate is bound at residue S87. E146 and E148 together coordinate Mg(2+). The active site involves E148. N6-acetyllysine is present on K176. Residues H225 to M227 carry the Microbody targeting signal motif.

It belongs to the IPP isomerase type 1 family. As to quaternary structure, monomer. Mg(2+) is required as a cofactor.

It localises to the peroxisome. The enzyme catalyses isopentenyl diphosphate = dimethylallyl diphosphate. It participates in isoprenoid biosynthesis; dimethylallyl diphosphate biosynthesis; dimethylallyl diphosphate from isopentenyl diphosphate: step 1/1. Functionally, catalyzes the 1,3-allylic rearrangement of the homoallylic substrate isopentenyl (IPP) to its highly electrophilic allylic isomer, dimethylallyl diphosphate (DMAPP). The polypeptide is Isopentenyl-diphosphate Delta-isomerase 1 (IDI1) (Mesocricetus auratus (Golden hamster)).